The primary structure comprises 421 residues: Immunoglobulin heavy constant epsilon (421 aa).

Ig-like domains are found at residues 5–97 (PQLY…VNIT), 99–184 (PTLE…KVTS), 201–301 (PRGV…RSIT), and 310–410 (PEVY…KTIS). C23 and C75 are disulfide-bonded. 9 N-linked (GlcNAc...) asparagine glycosylation sites follow: N43, N72, N84, N95, N166, N238, N261, N365, and N415. Intrachain disulfides connect C121–C180, C226–C285, and C330–C392.

The basic structural unit consists of two identical heavy chains and two identical light chains; disulfide-linked. N-terminal variable regions of the heavy and light chains form the antigen binding sites, whereas the C-terminal constant regions of the heavy chains interact with immune receptors to mediate effector functions.

It is found in the secreted. The protein resides in the cell membrane. In terms of biological role, constant region of immunoglobulin heavy chains. Immunoglobulins, also known as antibodies, are membrane-bound or secreted glycoproteins produced by B lymphocytes. In the recognition phase of humoral immunity, the membrane-bound immunoglobulins serve as receptors which, upon binding of a specific antigen, trigger the clonal expansion and differentiation of B lymphocytes into immunoglobulins-secreting plasma cells. Secreted immunoglobulins mediate the effector phase of humoral immunity, which results in the elimination of bound antigens. The antigen binding site is formed by the variable domain of one heavy chain, together with that of its associated light chain. Thus, each immunoglobulin has two antigen binding sites with remarkable affinity for a particular antigen. The variable domains are assembled by a process called V-(D)-J rearrangement and can then be subjected to somatic hypermutations which, after exposure to antigen and selection, allow affinity maturation for a particular antigen. The polypeptide is Immunoglobulin heavy constant epsilon (Mus musculus (Mouse)).